The chain runs to 56 residues: uncharacterized protein (56 aa).

2 consecutive transmembrane segments (helical) span residues 6–26 and 29–49; these read VILLAVMICLVSAITVFLLNG and VDFLDIGGTIIGCFLGIFVVV.

The protein localises to the cell membrane. This is an uncharacterized protein from Bacillus subtilis (strain 168).